The chain runs to 226 residues: 2,3-bisphosphoglycerate-dependent phosphoglycerate mutase (226 aa).

Residues 8–15 (RHGQSVWN), 21–22 (TG), arginine 58, 109–112 (ERMY), lysine 120, 136–137 (RR), and 180–181 (GN) contribute to the substrate site. The Tele-phosphohistidine intermediate role is filled by histidine 9. Catalysis depends on glutamate 109, which acts as the Proton donor/acceptor.

This sequence belongs to the phosphoglycerate mutase family. BPG-dependent PGAM subfamily.

The catalysed reaction is (2R)-2-phosphoglycerate = (2R)-3-phosphoglycerate. It participates in carbohydrate degradation; glycolysis; pyruvate from D-glyceraldehyde 3-phosphate: step 3/5. In terms of biological role, catalyzes the interconversion of 2-phosphoglycerate and 3-phosphoglycerate. The chain is 2,3-bisphosphoglycerate-dependent phosphoglycerate mutase from Chlamydia trachomatis serovar A (strain ATCC VR-571B / DSM 19440 / HAR-13).